The following is a 367-amino-acid chain: 4-hydroxyphenylpyruvate dioxygenase (367 aa).

VOC domains follow at residues 3–135 (GFDH…FVDR) and 166–324 (LIDH…IFTN). Histidine 169, histidine 252, and glutamate 335 together coordinate Fe cation.

It belongs to the 4HPPD family. Fe cation is required as a cofactor.

It catalyses the reaction 3-(4-hydroxyphenyl)pyruvate + O2 = homogentisate + CO2. It functions in the pathway amino-acid degradation; L-phenylalanine degradation; acetoacetate and fumarate from L-phenylalanine: step 3/6. In terms of biological role, key enzyme in the degradation of tyrosine. The sequence is that of 4-hydroxyphenylpyruvate dioxygenase (hpd) from Dictyostelium discoideum (Social amoeba).